Here is a 457-residue protein sequence, read N- to C-terminus: Multidrug resistance protein MdtK (457 aa).

A run of 12 helical transmembrane segments spans residues 11 to 31, 53 to 73, 93 to 113, 127 to 147, 160 to 180, 188 to 208, 243 to 263, 276 to 296, 316 to 336, 357 to 377, 387 to 407, and 416 to 436; these read LLAL…MGVV, IWLP…PIVA, WLAT…RFII, AIGF…YQVL, GMII…AFIY, LGGI…FLMM, LPVG…ALLV, IALN…IAAT, ITAL…SIIF, LMLF…GSGV, IFFI…YLLG, and MGPA…AIMM.

It belongs to the multi antimicrobial extrusion (MATE) (TC 2.A.66.1) family. MdtK subfamily.

The protein localises to the cell inner membrane. Multidrug efflux pump that functions probably as a Na(+)/drug antiporter. This is Multidrug resistance protein MdtK from Proteus mirabilis (strain HI4320).